A 219-amino-acid polypeptide reads, in one-letter code: ATP-dependent dethiobiotin synthetase BioD (219 aa).

12 to 17 provides a ligand contact to ATP; it reads EVGKTY. T16 contacts Mg(2+). K37 is an active-site residue. S41 is a binding site for substrate. ATP is bound by residues D52, 114–117, and 174–175; these read EGAG and NC. D52 and E114 together coordinate Mg(2+).

Belongs to the dethiobiotin synthetase family. Homodimer. Requires Mg(2+) as cofactor.

The protein localises to the cytoplasm. The catalysed reaction is (7R,8S)-7,8-diammoniononanoate + CO2 + ATP = (4R,5S)-dethiobiotin + ADP + phosphate + 3 H(+). It functions in the pathway cofactor biosynthesis; biotin biosynthesis; biotin from 7,8-diaminononanoate: step 1/2. Catalyzes a mechanistically unusual reaction, the ATP-dependent insertion of CO2 between the N7 and N8 nitrogen atoms of 7,8-diaminopelargonic acid (DAPA, also called 7,8-diammoniononanoate) to form a ureido ring. In Francisella tularensis subsp. holarctica (strain FTNF002-00 / FTA), this protein is ATP-dependent dethiobiotin synthetase BioD.